A 515-amino-acid polypeptide reads, in one-letter code: Methionine--tRNA ligase (515 aa).

Positions alanine 13 to histidine 23 match the 'HIGH' region motif. The 'KMSKS' region signature appears at lysine 300–serine 304. Lysine 303 is an ATP binding site.

Belongs to the class-I aminoacyl-tRNA synthetase family. MetG type 2B subfamily. Monomer.

It is found in the cytoplasm. The catalysed reaction is tRNA(Met) + L-methionine + ATP = L-methionyl-tRNA(Met) + AMP + diphosphate. Functionally, is required not only for elongation of protein synthesis but also for the initiation of all mRNA translation through initiator tRNA(fMet) aminoacylation. In Brucella melitensis biotype 1 (strain ATCC 23456 / CCUG 17765 / NCTC 10094 / 16M), this protein is Methionine--tRNA ligase.